A 316-amino-acid polypeptide reads, in one-letter code: Probable cell division protein WhiA (316 aa).

A DNA-binding region (H-T-H motif) is located at residues 274–308; that stretch reads SLKELGEMVSTGVISKSGVNHRLRKIDEIAEKLRN.

Belongs to the WhiA family.

Involved in cell division and chromosome segregation. The sequence is that of Probable cell division protein WhiA from Macrococcus caseolyticus (strain JCSC5402) (Macrococcoides caseolyticum).